The following is a 218-amino-acid chain: Protein N-lysine methyltransferase METTL21A (218 aa).

Residues Trp47, 73–75, Asp94, Trp125, and Ala143 contribute to the S-adenosyl-L-methionine site; that span reads GAG.

It belongs to the methyltransferase superfamily. METTL21 family. As to quaternary structure, interacts with heat shock protein 70 family members; at least some of these proteins are methylation substrates.

It localises to the cytoplasm. It carries out the reaction L-lysyl-[protein] + 3 S-adenosyl-L-methionine = N(6),N(6),N(6)-trimethyl-L-lysyl-[protein] + 3 S-adenosyl-L-homocysteine + 3 H(+). Its function is as follows. Protein-lysine methyltransferase that selectively trimethylates residues in heat shock protein 70 (HSP70) family members. Contributes to the in vivo trimethylation of Lys residues in HSPA1 and HSPA8. In vitro methylates 'Lys-561' in HSPA1, 'Lys-564' in HSPA2, 'Lys-585' in HSPA5, 'Lys-563' in HSPA6 and 'Lys-561' in HSPA8. This chain is Protein N-lysine methyltransferase METTL21A (METTL21A), found in Homo sapiens (Human).